Consider the following 287-residue polypeptide: Pantothenate synthetase (287 aa).

30–37 (MGALHEGH) is a binding site for ATP. The active-site Proton donor is H37. Q61 is a (R)-pantoate binding site. Q61 contacts beta-alanine. 147–150 (GEKD) contributes to the ATP binding site. Q153 provides a ligand contact to (R)-pantoate. Residue 184 to 187 (MSSR) coordinates ATP.

The protein belongs to the pantothenate synthetase family. Homodimer.

The protein resides in the cytoplasm. It carries out the reaction (R)-pantoate + beta-alanine + ATP = (R)-pantothenate + AMP + diphosphate + H(+). It participates in cofactor biosynthesis; (R)-pantothenate biosynthesis; (R)-pantothenate from (R)-pantoate and beta-alanine: step 1/1. Functionally, catalyzes the condensation of pantoate with beta-alanine in an ATP-dependent reaction via a pantoyl-adenylate intermediate. The chain is Pantothenate synthetase from Granulibacter bethesdensis (strain ATCC BAA-1260 / CGDNIH1).